We begin with the raw amino-acid sequence, 353 residues long: Guanine nucleotide-binding protein G(q) subunit alpha (353 aa).

2 S-palmitoyl cysteine lipidation sites follow: C3 and C4. Residues R32–V353 enclose the G-alpha domain. The G1 motif stretch occupies residues K35–T48. Residues G40–S47, L174–T180, D199–Q203, N268–D271, and A325 each bind GTP. Mg(2+)-binding residues include S47 and T180. Residues D172 to T180 are G2 motif. The tract at residues F195–R204 is G3 motif. Positions I264–D271 are G4 motif. Positions T323–T328 are G5 motif.

It belongs to the G-alpha family. G(q) subfamily. G proteins are composed of 3 units; alpha, beta and gamma. The alpha chain contains the guanine nucleotide binding site.

Functionally, guanine nucleotide-binding proteins (G proteins) are involved as modulators or transducers in various transmembrane signaling systems. The protein is Guanine nucleotide-binding protein G(q) subunit alpha of Lymnaea stagnalis (Great pond snail).